A 445-amino-acid chain; its full sequence is Exodeoxyribonuclease 7 large subunit (445 aa).

Belongs to the XseA family. As to quaternary structure, heterooligomer composed of large and small subunits.

The protein resides in the cytoplasm. The enzyme catalyses Exonucleolytic cleavage in either 5'- to 3'- or 3'- to 5'-direction to yield nucleoside 5'-phosphates.. Functionally, bidirectionally degrades single-stranded DNA into large acid-insoluble oligonucleotides, which are then degraded further into small acid-soluble oligonucleotides. The protein is Exodeoxyribonuclease 7 large subunit of Pasteurella multocida (strain Pm70).